The chain runs to 965 residues: Calsyntenin-2 (965 aa).

An N-terminal signal peptide occupies residues 1-20; it reads MLPGRLCLVPLLLALGVGSG. Residues 21-835 lie on the Extracellular side of the membrane; sequence GGSGDGGDSR…SIQRSSVVPS (815 aa). 2 Cadherin domains span residues 46-162 and 163-282; these read IETS…APTF and KEPA…MPLF. N-linked (GlcNAc...) asparagine glycans are attached at residues Asn58 and Asn100. Asn344, Asn376, Asn720, and Asn733 each carry an N-linked (GlcNAc...) asparagine glycan. The chain crosses the membrane as a helical span at residues 836–856; sequence IATVVIIISVCMLVFVVAMGV. Over 857–965 the chain is Cytoplasmic; the sequence is YRVRIAHQHF…NTAGVINIWK (109 aa). The interval 891–965 is disordered; it reads PMEKHEGPGH…NTAGVINIWK (75 aa). Positions 892 to 902 are enriched in basic and acidic residues; that stretch reads MEKHEGPGHGE. Residues 903-915 are compositionally biased toward acidic residues; sequence DETEGEEEEEAEE. The segment covering 942–959 has biased composition (polar residues); the sequence is QSGTSSQRPERSTWNTAG.

It belongs to the calsyntenin family. In terms of processing, proteolytically processed under normal cellular conditions. A primary zeta-cleavage generates a large extracellular (soluble) N-terminal domain (sAlc) and a short C-terminal transmembrane fragment (CTF1). A secondary cleavage catalyzed by gamma-secretase within the transmembrane domain releases the beta-Alc-gamma chain in the extracellular milieu and produces an intracellular fragment (AlcICD). This processing is strongly suppressed in the tripartite complex formed with APBA2 and APP, which seems to prevent the association with PSEN1.

The protein resides in the postsynaptic cell membrane. The protein localises to the endoplasmic reticulum membrane. It is found in the golgi apparatus membrane. Its subcellular location is the cell projection. It localises to the dendrite. Its function is as follows. Postsynaptic adhesion molecule that binds to presynaptic neurexins to mediate synapse formation, and which is involved in learning and memory. Promotes synapse development by acting as a cell adhesion molecule at the postsynaptic membrane, which associates with neurexin-alpha at the presynaptic membrane. This Rattus norvegicus (Rat) protein is Calsyntenin-2.